Consider the following 789-residue polypeptide: uncharacterized protein (789 aa).

Disordered stretches follow at residues 107–326 (YQQD…NNNN), 426–491 (MLKS…NNNN), 523–625 (SVNF…ISNN), 666–751 (THTF…KGNN), and 765–789 (PTRFNNKNNNNSNGFTSNKRFYNQH). The span at 113–123 (NNTDDEQEQEQ) shows a compositional bias: acidic residues. Composition is skewed to low complexity over residues 124–141 (EQQQKQNEIINKITTPIK), 151–194 (TSQT…ITPI), 201–213 (SISTSSSKQLRSS), and 225–270 (TSST…THNS). Acidic residues predominate over residues 274 to 290 (IDDDDGDNNDEINDEND). 2 stretches are compositionally biased toward low complexity: residues 291-326 (INSNNLTFSSSTKSKKINNNNNSIDSNNTNINNNNN) and 429-491 (SNNS…NNNN). Over residues 523–549 (SVNFDRNQNQKSPFLNNTSMPNINFNE) the composition is skewed to polar residues. Composition is skewed to low complexity over residues 550–581 (QSQQQSQNQYYQQQQQQQQQQSNNSMNQSINY), 602–617 (TSGSSLKYSTSSNNSK), 696–722 (HIMNSMNSNFNHHHNNNNQLFNNSGSN), and 766–789 (TRFNNKNNNNSNGFTSNKRFYNQH).

This is an uncharacterized protein from Dictyostelium discoideum (Social amoeba).